The primary structure comprises 281 residues: Rhomboid protease AarA (281 aa).

7 consecutive transmembrane segments (helical) span residues 16 to 36 (FSLGAIALTLTLVLLNIAVYF), 76 to 96 (MLHSNGTHLAFNCLALFVIGI), 105 to 125 (FKLLAIYIISGIGAALFSAYW), 145 to 165 (IGVGASGAIMGIAAASVIYLI), 185 to 205 (QLYNLIAMIALTLINGLQSGV), 208 to 228 (AAHIGGAIIGALISIAYILVP), and 233 to 253 (VANLCITVIAASLLTMMIYLY). The Nucleophile role is filled by S150. H210 serves as the catalytic Charge relay system.

This sequence belongs to the peptidase S54 family.

The protein resides in the cell membrane. The catalysed reaction is Cleaves type-1 transmembrane domains using a catalytic dyad composed of serine and histidine that are contributed by different transmembrane domains.. Functionally, rhomboid serine protease that catalyzes intramembrane proteolysis. Mediates quorum-sensing and the subsequent regulation of target genes via activation of the Tat protein export system. Catalyzes the proteolytic activation of TatA by removal of its N-terminal extension. The polypeptide is Rhomboid protease AarA (aarA) (Providencia stuartii).